Consider the following 147-residue polypeptide: 3-dehydroquinate dehydratase (147 aa).

The active-site Proton acceptor is the tyrosine 22. The substrate site is built by asparagine 74, histidine 80, and aspartate 87. Catalysis depends on histidine 101, which acts as the Proton donor. Residues 102–103 (IS) and arginine 112 contribute to the substrate site.

The protein belongs to the type-II 3-dehydroquinase family. In terms of assembly, homododecamer.

It carries out the reaction 3-dehydroquinate = 3-dehydroshikimate + H2O. It functions in the pathway metabolic intermediate biosynthesis; chorismate biosynthesis; chorismate from D-erythrose 4-phosphate and phosphoenolpyruvate: step 3/7. In terms of biological role, catalyzes a trans-dehydration via an enolate intermediate. The sequence is that of 3-dehydroquinate dehydratase from Lachnospira eligens (strain ATCC 27750 / DSM 3376 / VPI C15-48 / C15-B4) (Eubacterium eligens).